Consider the following 266-residue polypeptide: Proteasome subunit beta type-7 (266 aa).

The propeptide occupies 1–33 (MNHDPFSWGRPADSTYGAYNTQIANAGASPMVN).

Belongs to the peptidase T1B family. As to quaternary structure, the 26S proteasome consists of a 20S proteasome core and two 19S regulatory subunits. The 20S proteasome core is composed of 28 subunits that are arranged in four stacked rings, resulting in a barrel-shaped structure. The two end rings are each formed by seven alpha subunits, and the two central rings are each formed by seven beta subunits. The catalytic chamber with the active sites is on the inside of the barrel. Interacts with CIC1.

The protein localises to the cytoplasm. It localises to the nucleus. Non-catalytic component of the proteasome which degrades poly-ubiquitinated proteins in the cytoplasm and in the nucleus. It is essential for the regulated turnover of proteins and for the removal of misfolded proteins. The proteasome is a multicatalytic proteinase complex that is characterized by its ability to cleave peptides with Arg, Phe, Tyr, Leu, and Glu adjacent to the leaving group at neutral or slightly basic pH. It has an ATP-dependent proteolytic activity. PRE3 and PRE4 are necessary for the peptidyl-glutamyl-peptide-hydrolyzing activity. The polypeptide is Proteasome subunit beta type-7 (PRE4) (Saccharomyces cerevisiae (strain ATCC 204508 / S288c) (Baker's yeast)).